The sequence spans 189 residues: Auxin-responsive protein IAA3 (189 aa).

An EAR-like (transcriptional repression) motif is present at residues 12–16; that stretch reads LRLGL. A disordered region spans residues 42–65; the sequence is TDTEKEIESSSRKTETSPPRKAQI. Residues 43–56 are compositionally biased toward basic and acidic residues; the sequence is DTEKEIESSSRKTE. The PB1 domain maps to 92–179; the sequence is GIYVKVSMDG…TCKRLRIMKG (88 aa).

Belongs to the Aux/IAA family. As to quaternary structure, homodimers and heterodimers. Interacts with TPL. Interacts with TIR1, the F-box component of the Skp1-Cdc53/cullin-F-box (SCFTIR1) E3 ubiquitin ligase complex. Post-translationally, phosphorylated by phytochrome A in vitro. In terms of tissue distribution, highly expressed in stems and flowers. Expressed in hypocotyls, cotyledons and leaves, but barely detected in roots. Expressed in root tips. In the root meristem, specifically detected at the vascular tissue transition zone.

The protein resides in the nucleus. In terms of biological role, aux/IAA proteins are short-lived transcriptional factors that function as repressors of early auxin response genes at low auxin concentrations. Repression is thought to result from the interaction with auxin response factors (ARFs), proteins that bind to the auxin-responsive promoter element (AuxRE). Plays a central role in auxin regulation of root growth, in gravitropism, and in lateral root formation. Regulated by an auxin-induced protein turnover. Formation of heterodimers with ARF proteins may alter their ability to modulate early auxin response genes expression. When activated by cytokinin, restricts the expression of the PIN genes to the vascular transition zone. Induction of SHY2 in the vascular transition zone restricts BRX expression to down-regulate PIN3 and thus limit meristem growth, but proper SHY2 expression requires BRX. Involved in meristem growth and in determining its size. May participate in strigolactone signaling to regulate meristem size and lateral root formation. The chain is Auxin-responsive protein IAA3 (IAA3) from Arabidopsis thaliana (Mouse-ear cress).